Reading from the N-terminus, the 221-residue chain is UPF0502 protein CPS_0106 (221 aa).

Belongs to the UPF0502 family.

The sequence is that of UPF0502 protein CPS_0106 from Colwellia psychrerythraea (strain 34H / ATCC BAA-681) (Vibrio psychroerythus).